We begin with the raw amino-acid sequence, 121 residues long: Large ribosomal subunit protein uL14 (121 aa).

Belongs to the universal ribosomal protein uL14 family. In terms of assembly, part of the 50S ribosomal subunit. Forms a cluster with proteins L3 and L19. In the 70S ribosome, L14 and L19 interact and together make contacts with the 16S rRNA in bridges B5 and B8.

Its function is as follows. Binds to 23S rRNA. Forms part of two intersubunit bridges in the 70S ribosome. This chain is Large ribosomal subunit protein uL14, found in Aquifex pyrophilus.